A 327-amino-acid polypeptide reads, in one-letter code: Tryptophan--tRNA ligase (327 aa).

ATP is bound by residues Gln9–Ser11 and Gly17–Asn18. A 'HIGH' region motif is present at residues Pro10–Asn18. L-tryptophan is bound at residue Asp132. ATP is bound by residues Gly144–Asp146, Ile183, and Lys192–Ser196. Positions Lys192–Ser196 match the 'KMSKS' region motif.

The protein belongs to the class-I aminoacyl-tRNA synthetase family. In terms of assembly, homodimer.

The protein localises to the cytoplasm. The catalysed reaction is tRNA(Trp) + L-tryptophan + ATP = L-tryptophyl-tRNA(Trp) + AMP + diphosphate + H(+). Catalyzes the attachment of tryptophan to tRNA(Trp). The protein is Tryptophan--tRNA ligase of Oceanobacillus iheyensis (strain DSM 14371 / CIP 107618 / JCM 11309 / KCTC 3954 / HTE831).